Reading from the N-terminus, the 385-residue chain is Mannitol-1-phosphate 5-dehydrogenase (385 aa).

3–14 (ALHFGAGNIGRG) contacts NAD(+).

It belongs to the mannitol dehydrogenase family.

It carries out the reaction D-mannitol 1-phosphate + NAD(+) = beta-D-fructose 6-phosphate + NADH + H(+). The protein is Mannitol-1-phosphate 5-dehydrogenase of Pasteurella multocida (strain Pm70).